The sequence spans 536 residues: Chaperonin GroEL (536 aa).

ATP contacts are provided by residues 29–32, 86–90, glycine 413, 476–478, and aspartate 492; these read TLGP, DGTTT, and DAA.

It belongs to the chaperonin (HSP60) family. In terms of assembly, forms a cylinder of 14 subunits composed of two heptameric rings stacked back-to-back. Interacts with the co-chaperonin GroES.

The protein resides in the cytoplasm. The catalysed reaction is ATP + H2O + a folded polypeptide = ADP + phosphate + an unfolded polypeptide.. Its function is as follows. Together with its co-chaperonin GroES, plays an essential role in assisting protein folding. The GroEL-GroES system forms a nano-cage that allows encapsulation of the non-native substrate proteins and provides a physical environment optimized to promote and accelerate protein folding. The polypeptide is Chaperonin GroEL (Methanococcus vannielii (strain ATCC 35089 / DSM 1224 / JCM 13029 / OCM 148 / SB)).